We begin with the raw amino-acid sequence, 568 residues long: MSASVFNRCWSKVILETLSRQGVSHFCIAPGSRSTPLTLEAIRLQENGRGTCHTHFDERGLGFFALGIAKASKKPVAVIVTSGTATANLYPAIIEARQTDVPLIILTADRPPELLECGANQAILQQNMFAQYPIASINLPRPSQNYSAQWLISVLDQACFRQKQGGVIHINVPFAEPLYNANNDEIDLHPWLSNIQSWLTQNKNWIQHQEQHTEVITHKYWDQWRTKKGIIIVGRLPSEQAMGIAEWAENMGWIMITDIQSHVKPTLPYADIWLANQTVRKKLLQAEIVIQFGSGFIGKRINQFLAEFKGEYWIIENNQKAVDPYHHAHTRFNAKPHHWLRAHPPMRKKPWLLEPLALAKFCADFIKQRVGSNLNEASLAHNIELLLPKSNSVLFLGNSLFVRLADALSQPSANYPIYTNRGASGIDGLLATAAGIAVGSEQTLVAMIGDTSTLYDLNSFALFKQLNQPAIIFVINNNGGAIFDMLPVDIAVKEKYYRMSHYLEFSHIAAMFDLKYARPYTWADLATVLKQAYSRRETTIIEIKINPNDGSNIYKDLIDKIGHALIGV.

The protein belongs to the TPP enzyme family. MenD subfamily. Homodimer. The cofactor is Mg(2+). Requires Mn(2+) as cofactor. Thiamine diphosphate serves as cofactor.

The enzyme catalyses isochorismate + 2-oxoglutarate + H(+) = 5-enolpyruvoyl-6-hydroxy-2-succinyl-cyclohex-3-ene-1-carboxylate + CO2. Its pathway is quinol/quinone metabolism; 1,4-dihydroxy-2-naphthoate biosynthesis; 1,4-dihydroxy-2-naphthoate from chorismate: step 2/7. It participates in quinol/quinone metabolism; menaquinone biosynthesis. Functionally, catalyzes the thiamine diphosphate-dependent decarboxylation of 2-oxoglutarate and the subsequent addition of the resulting succinic semialdehyde-thiamine pyrophosphate anion to isochorismate to yield 2-succinyl-5-enolpyruvyl-6-hydroxy-3-cyclohexene-1-carboxylate (SEPHCHC). The sequence is that of 2-succinyl-5-enolpyruvyl-6-hydroxy-3-cyclohexene-1-carboxylate synthase from Histophilus somni (strain 2336) (Haemophilus somnus).